The sequence spans 424 residues: MDFSRRSFHRSLSSSLQAPVVSTVGMQRLGTTPSVYGGAGGRGIRISNSRHTVNYGSDLTGGGDLFVGNEKMAMQNLNDRLASYLEKVRTLEQSNSKLEVQIKQWYETNAPRAGRDYSAYYRQIEELRSQIKDAQLQNARCVLQIDNAKLAAEDFRLKYETERGIRLTVEADLQGLNKVFDDLTLHKTDLEIQIEELNKDLALLKKEHQEEVDGLHKHLGNTVNVEVDAAPGLNLGVIMNEMRQKYEVMAQKNLQEAKEQFERQTAVLQQQVTVNTEELKGTEVQLTELRRTSQSLEIELQSHLSMKESLEHTLEETKARYSSQLANLQSLLSSLEAQLMQIRSNMERQNNEYHILLDIKTRLEQEIATYRRLLEGEDVKTTEYQLSTLEERDIKKTRKIKTVVQEVVDGKVVSSEVKEVEENI.

A head region spans residues 1–69 (MDFSRRSFHR…TGGGDLFVGN (69 aa)). At serine 13 the chain carries Phosphoserine; by MAPKAPK2, MAPKAPK3 and PKC. The interval 70 to 105 (EKMAMQNLNDRLASYLEKVRTLEQSNSKLEVQIKQW) is coil 1A. The region spanning 70–381 (EKMAMQNLND…RLLEGEDVKT (312 aa)) is the IF rod domain. Residues 106 to 123 (YETNAPRAGRDYSAYYRQ) are linker 1. The interval 124–215 (IEELRSQIKD…KEHQEEVDGL (92 aa)) is coil 1B. The interval 216 to 238 (HKHLGNTVNVEVDAAPGLNLGVI) is linker 12. Residues 239–377 (MNEMRQKYEV…ATYRRLLEGE (139 aa)) are coil 2. The tract at residues 378 to 424 (DVKTTEYQLSTLEERDIKKTRKIKTVVQEVVDGKVVSSEVKEVEENI) is tail.

This sequence belongs to the intermediate filament family. Heterotetramer of two type I and two type II keratins. Associates with KRT8. Hyperphosphorylation at Ser-13 occurs during the early stages of apoptosis but becomes less prominent during the later stages. Phosphorylation at Ser-13 also increases in response to stress brought on by cell injury. Post-translationally, proteolytically cleaved by caspases during apoptosis. Cleavage occurs at Asp-228. As to expression, expressed predominantly in the intestinal epithelium. Expressed in luminal cells of colonic mucosa. Also expressed in the Merkel cells of keratinized oral mucosa; specifically at the tips of some rete ridges of the gingival mucosa, in the basal layer of the palatal mucosa and in the taste buds of lingual mucosa.

The protein resides in the cytoplasm. Its function is as follows. Plays a significant role in maintaining keratin filament organization in intestinal epithelia. When phosphorylated, plays a role in the secretion of mucin in the small intestine. The chain is Keratin, type I cytoskeletal 20 (KRT20) from Homo sapiens (Human).